The primary structure comprises 225 residues: PKHD-type hydroxylase YbiX (225 aa).

One can recognise a Fe2OG dioxygenase domain in the interval 78–177; it reads TLSTPLFNRY…RVASFMWIQS (100 aa). 3 residues coordinate Fe cation: histidine 96, aspartate 98, and histidine 158. Arginine 168 contributes to the 2-oxoglutarate binding site.

Requires Fe(2+) as cofactor. It depends on L-ascorbate as a cofactor.

This is PKHD-type hydroxylase YbiX from Escherichia fergusonii (strain ATCC 35469 / DSM 13698 / CCUG 18766 / IAM 14443 / JCM 21226 / LMG 7866 / NBRC 102419 / NCTC 12128 / CDC 0568-73).